The sequence spans 215 residues: Adenylate kinase (215 aa).

10–15 (GAGKGT) is a binding site for ATP. The tract at residues 30 to 59 (STGDMLRAAVKAGTPIGLKAKAVMEAGELV) is NMP. AMP contacts are provided by residues threonine 31, arginine 36, 57 to 59 (ELV), 85 to 88 (GYPR), and glutamine 92. Residues 126-163 (GRYTCANCGEGYHDRFKQPKVAGVCDVCGSAEFKRRPD) form an LID region. Arginine 127 is an ATP binding site. Residues cysteine 130, cysteine 133, cysteine 150, and cysteine 153 each coordinate Zn(2+). Residues arginine 160 and arginine 172 each contribute to the AMP site. Alanine 200 contacts ATP.

The protein belongs to the adenylate kinase family. In terms of assembly, monomer.

The protein resides in the cytoplasm. It catalyses the reaction AMP + ATP = 2 ADP. Its pathway is purine metabolism; AMP biosynthesis via salvage pathway; AMP from ADP: step 1/1. Functionally, catalyzes the reversible transfer of the terminal phosphate group between ATP and AMP. Plays an important role in cellular energy homeostasis and in adenine nucleotide metabolism. This Rhizorhabdus wittichii (strain DSM 6014 / CCUG 31198 / JCM 15750 / NBRC 105917 / EY 4224 / RW1) (Sphingomonas wittichii) protein is Adenylate kinase.